We begin with the raw amino-acid sequence, 135 residues long: uncharacterized protein (135 aa).

It belongs to the transcriptional regulatory CopG/NikR family.

This is an uncharacterized protein from Methanocaldococcus jannaschii (strain ATCC 43067 / DSM 2661 / JAL-1 / JCM 10045 / NBRC 100440) (Methanococcus jannaschii).